The sequence spans 90 residues: N(2)-fixation sustaining protein CowN (90 aa).

Belongs to the CowN family.

Functionally, is required to sustain N(2)-dependent growth in the presence of low levels of carbon monoxide (CO). Probably acts by protecting the N(2) fixation ability of the nitrogenase complex, which is inactivated in the presence of CO. This chain is N(2)-fixation sustaining protein CowN, found in Halorhodospira halophila (strain DSM 244 / SL1) (Ectothiorhodospira halophila (strain DSM 244 / SL1)).